The sequence spans 292 residues: Probable serine/threonine-protein kinase FPV226 (292 aa).

One can recognise a Protein kinase domain in the interval tryptophan 14–leucine 292. ATP contacts are provided by residues isoleucine 20–valine 28 and lysine 43. Aspartate 147 serves as the catalytic Proton acceptor.

Belongs to the protein kinase superfamily. Ser/Thr protein kinase family. Poxviruses subfamily.

It carries out the reaction L-seryl-[protein] + ATP = O-phospho-L-seryl-[protein] + ADP + H(+). The enzyme catalyses L-threonyl-[protein] + ATP = O-phospho-L-threonyl-[protein] + ADP + H(+). The protein is Probable serine/threonine-protein kinase FPV226 of Vertebrata (FPV).